A 788-amino-acid chain; its full sequence is Response regulator SSK1 (788 aa).

Positions 534-691 (NVLIVEDNII…WLERKVKEWG (158 aa)) constitute a Response regulatory domain. Asp583 carries the post-translational modification 4-aspartylphosphate.

Belongs to the SSK1 family.

The protein resides in the cytoplasm. Two-domain response regulator protein in the two-component signal transduction system of the HOG1 pathway. Controls high-osmolarity adaptation and fungicide sensitivity via its regulation of the phosphorylation of HOG1. The sequence is that of Response regulator SSK1 from Cochliobolus heterostrophus (strain C5 / ATCC 48332 / race O) (Southern corn leaf blight fungus).